The chain runs to 196 residues: Thymidine kinase (196 aa).

Residue Gly-17–Thr-24 participates in ATP binding. The active-site Proton acceptor is Glu-92. A substrate-binding site is contributed by Phe-121. Zn(2+) is bound by residues Cys-146 and Cys-149. Leu-166–Gly-170 is a binding site for substrate. Residues Cys-179 and Cys-182 each contribute to the Zn(2+) site.

This sequence belongs to the thymidine kinase family.

The catalysed reaction is thymidine + ATP = dTMP + ADP + H(+). In terms of biological role, phosphorylates thymidine. ASFV replicates in the cytoplasm of infected cells and contains genes encoding a number of enzymes needed for DNA synthesis, including thymidine kinase. Important for growth in swine macrophages in vitro and is a virus virulence factor in swine. This is Thymidine kinase from Ornithodoros (relapsing fever ticks).